A 2282-amino-acid chain; its full sequence is MKGHQFKSWIFELREILREIKNSHYFLDSWTQFNSVGSFIHIFFHQERFIKLLDSRIWSILFSRNSQGSTSNRYFTIKGVVLFVVVVLIYRINNRKMVERKNLYLTGLLPIPMNSIGPRNDTLEESFGSSNINRLIVSLLYLPKGKKISESRFLDPKESTWVLPITKKCIMSESNWGSRWWRNWIGKKRDSSCKISNETVAGIEISFKEKDIKYLEFLFVYYMDDPIRKDHDWELFDRLSPRKGRNIINLNSGQLFEILVKDWICYLMFAFREKIPIEVEGFFKQQGAGSTIQSNDIEHVSHLFSRKKWAISLQNCAQFHMWQFRQDLFVSWGNNPHESDFLRNISRENWIWLDNVWLVNKDRFFSKARNISSNIQYDSTRSSFLQGRDSSQLKGSSDQSRDHFDSISNEDSEYHTLINQREIQQLKERSILWDPSFLQTERTEIESDRFPKCLSGYSSMSRLFTEGAKEMNNHLLPEEIEEFLGNPTRSIRSFFSDRWSELHLGSNPTERSTRDQKLLKKEQDVSFVPSRRSENKEIVNIFKTITYLQNTVSIHPISSDPGCDMVLKDELDMDSSNKISFLNKNPFFDLFHLFHDRNGGGYTLHHDFESEERFQEMADLFTLSITEPDLVYHKGFAFFIDSYGLDQKQFLNEVFNSRDESKKKSLLVLPPIFYEENESFYRRIRKKWVRISCGNDLEDPKQKRVVFASNNIMEAVNQYGLIRNLIQIQYSTYGYIRNVLNQFFLMNRSDRNFEYGIQKDQIGNDTLNHRTLMKYTINQHLSNLKQSQKKWFDPLIFLSRTERSMNWDPNSYRYKWSNGSNNFQEHFISEQKSRFLFQVVFDRLRINQYSIDWSEVIDKKDLSKSLPFFLSKLLLFLSKFILFLSNSLPFFFVSFGNIPIHRSEIHIYELKGPNDQLCNQLLEPIGLQIVHLKKWKPFLLDDHDTSQKSKFLINGGTISPFLFNKIPKWMIDSFHTRNNRRKSFDNTDSSFSMISHDQDNWLNPVKPFHRSSLISSFYKANRLRFLNNLHHFCFYCNKRFPFYVEKARIKNYDFTYGQFLNILFIRNKIFSLCGGKKKHAFLERDTISPIESQVSNIFIPNDFPQSGDESLYKSFHFPIRPDPFVRRAIYSIADVSGTPLTEGQIFNFERTYCQPLSDINLSDSEGKNLHQYLNFNSNMGLIHTPCSEKYLPSEKRKKRSLCLKKCVEKGQMYRTFQGDSAFSTLSKWNLFQTYMPWFLTSTGYKYLNLIFLDTFSDHLLPILSSSQKIVSIFHDIMHGSDISWRILQKNLWKTQWNLISEISSKCLHNLLLSEEMIHRNNEPPLISTRLRSPNVREFLYSILFLLLVAGYLVRTHLLFVSRAYSELQTEFEKVKSLMIPSYMIELRKLLDRYPTSELNSFWLKNLFLVALEQLGDLLEEIRGSASGGNMLWGGGPAYGVKSIRSKKKFLNINLIDLISIIPNPINRITFSRNTRHLSHTSKEIYSLIRKRKNVNGDWIDDKIESLVANSDSIDDKEREFLVQFSTLTTEKRIDQILLSLTHSDHLSKNDSGYQMIEEPGAIYLRYLVDIHKKYLMNYEFNTPCLAERRIFLAHYQTITYSQTSCGANSFHFPSHGKPFSLRLALSPSRGILVIGSIGTGRSYLVKYLATNSYVPFITVFLNKFLDNKPKGFLIDDRDDIDDSDDIDVSDDIDRDLDTELELLTRMNVLTMDMMPEIDRFYITLQFELAKAMSPCIIWIPNIHDLDVNESNYLSLGLLVNYLSRDCERCSTRNILVIASTHIPQKVDPALIAPNKLNTCIKIRRLLIPQQRKHVFTLSYSRGFHLEKKMFHTKRFGSVTMGSNVRDLVALTNEALSISITQKKSIIDTNIIRSALHRQTWDLRSQVRSVQDHGILFYQIGRAVAQNVFLSNCPIDPISIYMKKKSCNEGDSYLYKWYFELGTSMKKLTILLYLLSCSAGSIAQDLWSLPGPDEKNGITYYGLVENDSDLVHGLLEVEGALVGSSRTEKDCSQFDNDRVTLLLRPEPRSPLDMMQNGSCSILDQRFLYEKYESEFEEGEVEGILDPQQIEEDLFNHIVWAPRIWSPWGFLFDCIERPNSLGFPYWARSFRGKRIIYDEEDELQENDSEFLQSGTMQYQIRDRSSKEQGVFRISQFIWDPADPLFFLFKDQPLVSVFSHREFFADEEMSKGLLTSQTDPPTSIYKRWFIKNTQEKHFELLIHRQRWLRTKSSLSNGFFRSNTLSESYQYLSNLFLSNGRLLDQMTKALLRKRWLFPDEMKIGFM.

An ATP-binding site is contributed by 1635–1642 (GSIGTGRS).

This sequence belongs to the Ycf2 family.

Its subcellular location is the plastid. The protein localises to the chloroplast stroma. Probable ATPase of unknown function. Its presence in a non-photosynthetic plant (Epifagus virginiana) and experiments in tobacco indicate that it has an essential function which is probably not related to photosynthesis. The sequence is that of Protein Ycf2 from Populus alba (White poplar).